Here is a 566-residue protein sequence, read N- to C-terminus: Sodium-dependent high-affinity dicarboxylate transporter 3 (566 aa).

The next 12 helical transmembrane spans lie at 55–75 (LVLV…GPEW), 92–112 (VMPL…VGVL), 123–139 (NDTN…AAAV), 162–182 (WIML…SNTA), 219–239 (MATG…TGTA), 268–288 (WIFF…MTLV), 329–349 (ILLS…GVFF), 352–372 (GAYT…VLPS), 400–420 (ETFP…AAGV), 439–459 (LPLW…TNIC), 496–516 (FAFI…SGMV), and 521–541 (MAFV…LYMN).

Belongs to the SLC13A/DASS transporter (TC 2.A.47) family. NADC subfamily. In terms of tissue distribution, nad-1 and nad-2 are coexpressed in the intestinal tract from early larvae to adults, expression is from the pharynx through to the anus. Expression level is significantly greater in the anterior half of the intestine than in the posterior half.

The protein localises to the membrane. Its function is as follows. High-affinity sodium-dicarboxylate cotransporter that accepts a range of tricarboxylic acid-cycle intermediates with 4-5 carbon atoms. There is no interaction with monocarboxylates. Plays a role in the regulation of life span. This chain is Sodium-dependent high-affinity dicarboxylate transporter 3 (nac-3), found in Caenorhabditis elegans.